The sequence spans 494 residues: MDCSSPLSLFHLLLVCTVMVKCCSASDLHYSDALEKSILFFEGQRSGKLPTNQRLTWRGDSGLSDGSSYHVDLVGGYYDAGDNLKFGLPMAFTTTMLAWGIIEFGCLMPEQVENARAALRWSTDYLLKASTATSNSLYVQVGEPNADHRCWERPEDMDTPRNVYKVSTQNPGSDVAAETAAALAAASIVFGDSDSSYSTKLLHTAVKVFEFADQYRGSYSDSLGSVVCPFYCSYSGYNDELLWGASWLHRASQNASYMTYIQSNGHTLGADDDDYSFSWDDKRVGTKVLLSKGFLQDRIEELQLYKVHTDNYICSLIPGTSSFQAQYTPGGLLYKGSASNLQYVTSTAFLLLTYANYLNSSGGHASCGTTTVTAKNLISLAKKQVDYILGQNPAKMSYMVGFGERYPQHVHHRGSSLPSVQVHPNSIPCNAGFQYLYSSPPNPNILVGAILGGPDNRDSFSDDRNNYQQSEPATYINAPLVGALAFFAANPVTE.

A signal peptide spans 1 to 25; that stretch reads MDCSSPLSLFHLLLVCTVMVKCCSA. Residue Asp82 is the Nucleophile of the active site. N-linked (GlcNAc...) asparagine glycosylation is found at Asn254 and Asn359. Catalysis depends on residues His411, Asp462, and Glu471.

It belongs to the glycosyl hydrolase 9 (cellulase E) family.

The catalysed reaction is Endohydrolysis of (1-&gt;4)-beta-D-glucosidic linkages in cellulose, lichenin and cereal beta-D-glucans.. Functionally, involved in ripening fruit process. In Persea americana (Avocado), this protein is Endoglucanase 1 (CEL1).